The following is a 259-amino-acid chain: uncharacterized protein (259 aa).

An N-terminal signal peptide occupies residues 1 to 28; sequence MNIKRRLKYLTSCLLVSAFFWINSSAWA. Transmembrane regions (helical) follow at residues 32–52 and 191–211; these read EIPP…IYVA and WGFL…GIFT.

It is found in the cell membrane. This is an uncharacterized protein from Coxiella burnetii (strain RSA 493 / Nine Mile phase I).